We begin with the raw amino-acid sequence, 275 residues long: Undecaprenyl-diphosphatase (275 aa).

The next 8 membrane-spanning stretches (helical) occupy residues 4–24 (IYGL…EFLP), 54–74 (LGSI…LFGL), 92–112 (LHLY…LMFY), 123–143 (YVMY…LIHD), 154–174 (ISYL…LPGF), 194–214 (AFEF…ILDL), 228–248 (MFII…KLFW), and 255–275 (SFIP…LILI).

This sequence belongs to the UppP family.

It localises to the cell membrane. The catalysed reaction is di-trans,octa-cis-undecaprenyl diphosphate + H2O = di-trans,octa-cis-undecaprenyl phosphate + phosphate + H(+). In terms of biological role, catalyzes the dephosphorylation of undecaprenyl diphosphate (UPP). Confers resistance to bacitracin. The sequence is that of Undecaprenyl-diphosphatase from Baumannia cicadellinicola subsp. Homalodisca coagulata.